The primary structure comprises 512 residues: Gamma-aminobutyric acid receptor subunit beta-2 (512 aa).

Residues 1 to 25 (MWRVRKRGYFGIWSFPLIIAAVCAQ) form the signal peptide. Residues 26–244 (SVNDPSNMSL…SFKLKRNIGY (219 aa)) are Extracellular-facing. N-linked (GlcNAc...) asparagine glycans are attached at residues Asn-32 and Asn-104. Tyr-121 is a binding site for histamine. Cysteines 160 and 174 form a disulfide. Residue Asn-173 is glycosylated (N-linked (GlcNAc...) asparagine). Residues 180–181 (SY) and Thr-226 contribute to the histamine site. 4-aminobutanoate-binding residues include Tyr-181 and Thr-226. Helical transmembrane passes span 245 to 266 (FILQ…SFWI), 270 to 292 (ASAA…NTHL), and 304 to 326 (AIDM…YALV). The Cytoplasmic portion of the chain corresponds to 327 to 489 (NYIFFGRGPQ…DLTDVNAIDR (163 aa)). Tyr-441 carries the post-translational modification Phosphotyrosine. Residues 490–511 (WSRIFFPVVFSFFNIVYWLYYV) traverse the membrane as a helical segment.

Belongs to the ligand-gated ion channel (TC 1.A.9) family. Gamma-aminobutyric acid receptor (TC 1.A.9.5) subfamily. GABRB2 sub-subfamily. In terms of assembly, heteropentamer, formed by a combination of alpha (GABRA1-6), beta (GABRB1-3), gamma (GABRG1-3), delta (GABRD), epsilon (GABRE), rho (GABRR1-3), pi (GABRP) and theta (GABRQ) chains, each subunit exhibiting distinct physiological and pharmacological properties. Interacts with UBQLN1. May interact with KIF21B. Identified in a complex of 720 kDa composed of LHFPL4, NLGN2, GABRA1, GABRB2, GABRG2 and GABRB3. In terms of processing, glycosylated.

Its subcellular location is the postsynaptic cell membrane. It localises to the cell membrane. The protein localises to the cytoplasmic vesicle. It carries out the reaction chloride(in) = chloride(out). Allosterically activated by benzodiazepines and the anesthetic etomidate. Inhibited by the antagonist bicuculline. Potentiated by histamine. Beta subunit of the heteropentameric ligand-gated chloride channel gated by gamma-aminobutyric acid (GABA), a major inhibitory neurotransmitter in the brain. GABA-gated chloride channels, also named GABA(A) receptors (GABAAR), consist of five subunits arranged around a central pore and contain GABA active binding site(s) located at the alpha and beta subunit interface(s). When activated by GABA, GABAARs selectively allow the flow of chloride anions across the cell membrane down their electrochemical gradient. Chloride influx into the postsynaptic neuron following GABAAR opening decreases the neuron ability to generate a new action potential, thereby reducing nerve transmission. GABAARs containing alpha-1 and beta-2 or -3 subunits exhibit synaptogenic activity; the gamma-2 subunit being necessary but not sufficient to induce rapid synaptic contacts formation. Extrasynaptic beta-2 receptors contribute to the tonic GABAergic inhibition. Beta-containing GABAARs can simultaneously bind GABA and histamine where histamine binds at the interface of two neighboring beta subunits, which may be involved in the regulation of sleep and wakefulness. The polypeptide is Gamma-aminobutyric acid receptor subunit beta-2 (Mus musculus (Mouse)).